Here is a 688-residue protein sequence, read N- to C-terminus: Methionine--tRNA ligase (688 aa).

Residues 13 to 23 (PYANGQIHIGH) carry the 'HIGH' region motif. Cys144, Cys147, Cys157, and Cys160 together coordinate Zn(2+). The 'KMSKS' region motif lies at 335 to 339 (KMSKS). Residue Lys338 participates in ATP binding. One can recognise a tRNA-binding domain in the interval 582-688 (DFAKIDLRVA…SGAVPGMRIG (107 aa)).

The protein belongs to the class-I aminoacyl-tRNA synthetase family. MetG type 1 subfamily. As to quaternary structure, homodimer. Zn(2+) is required as a cofactor.

The protein resides in the cytoplasm. The catalysed reaction is tRNA(Met) + L-methionine + ATP = L-methionyl-tRNA(Met) + AMP + diphosphate. Its function is as follows. Is required not only for elongation of protein synthesis but also for the initiation of all mRNA translation through initiator tRNA(fMet) aminoacylation. This Cupriavidus pinatubonensis (strain JMP 134 / LMG 1197) (Cupriavidus necator (strain JMP 134)) protein is Methionine--tRNA ligase.